The primary structure comprises 361 residues: Phosphoserine aminotransferase (361 aa).

Position 43 (arginine 43) interacts with L-glutamate. Pyridoxal 5'-phosphate-binding positions include 77–78 (AS), tryptophan 103, threonine 153, aspartate 173, and glutamine 196. Residue lysine 197 is modified to N6-(pyridoxal phosphate)lysine. A pyridoxal 5'-phosphate-binding site is contributed by 238-239 (NT).

Belongs to the class-V pyridoxal-phosphate-dependent aminotransferase family. SerC subfamily. Homodimer. Pyridoxal 5'-phosphate is required as a cofactor.

It is found in the cytoplasm. It catalyses the reaction O-phospho-L-serine + 2-oxoglutarate = 3-phosphooxypyruvate + L-glutamate. The catalysed reaction is 4-(phosphooxy)-L-threonine + 2-oxoglutarate = (R)-3-hydroxy-2-oxo-4-phosphooxybutanoate + L-glutamate. Its pathway is amino-acid biosynthesis; L-serine biosynthesis; L-serine from 3-phospho-D-glycerate: step 2/3. It functions in the pathway cofactor biosynthesis; pyridoxine 5'-phosphate biosynthesis; pyridoxine 5'-phosphate from D-erythrose 4-phosphate: step 3/5. In terms of biological role, catalyzes the reversible conversion of 3-phosphohydroxypyruvate to phosphoserine and of 3-hydroxy-2-oxo-4-phosphonooxybutanoate to phosphohydroxythreonine. The sequence is that of Phosphoserine aminotransferase from Pseudomonas putida (strain ATCC 47054 / DSM 6125 / CFBP 8728 / NCIMB 11950 / KT2440).